The following is a 326-amino-acid chain: RNA-binding motif protein, X-linked 2 (326 aa).

A Glycyl lysine isopeptide (Lys-Gly) (interchain with G-Cter in SUMO2) cross-link involves residue Lys8. Residues 36-114 form the RRM domain; the sequence is AWIFVGGLPY…RTIRVDHVSN (79 aa). The interval 117-326 is disordered; that stretch reads APQESEDVDD…SYHGSDRRHH (210 aa). At Thr140 the chain carries Phosphothreonine. Ser149 is modified (phosphoserine). Basic residues predominate over residues 157–172; the sequence is TKKHKKDKKEKKKRKK. The segment covering 177–190 has biased composition (polar residues); the sequence is GQAQAEQPSCSRSA. 4 stretches are compositionally biased toward basic and acidic residues: residues 191–200, 207–219, 236–245, and 255–273; these read TVKEKKDERA, KTSE…EHRE, ARAEDPECKA, and KSAS…ERGR. Ser274 carries the post-translational modification Phosphoserine. Residues 291–312 show a composition bias toward basic residues; that stretch reads HRSRSRSRSPDKSHRHKKYRHS. The span at 313–326 shows a compositional bias: basic and acidic residues; that stretch reads RERDSYHGSDRRHH.

It belongs to the IST3 family. Part of the activated spliceosome B/catalytic step 1 spliceosome, one of the forms of the spliceosome which has a well-formed active site but still cannot catalyze the branching reaction and is composed of at least 52 proteins, the U2, U5 and U6 snRNAs and the pre-mRNA. Component of the minor spliceosome, which splices U12-type introns.

The protein localises to the nucleus. Involved in pre-mRNA splicing as component of the activated spliceosome. As a component of the minor spliceosome, involved in the splicing of U12-type introns in pre-mRNAs. This chain is RNA-binding motif protein, X-linked 2 (Rbmx2), found in Mus musculus (Mouse).